A 140-amino-acid polypeptide reads, in one-letter code: Large ribosomal subunit protein uL11 (140 aa).

This sequence belongs to the universal ribosomal protein uL11 family. In terms of assembly, part of the ribosomal stalk of the 50S ribosomal subunit. Interacts with L10 and the large rRNA to form the base of the stalk. L10 forms an elongated spine to which L12 dimers bind in a sequential fashion forming a multimeric L10(L12)X complex. In terms of processing, one or more lysine residues are methylated.

Forms part of the ribosomal stalk which helps the ribosome interact with GTP-bound translation factors. The sequence is that of Large ribosomal subunit protein uL11 from Desulfatibacillum aliphaticivorans.